Consider the following 303-residue polypeptide: Methionyl-tRNA formyltransferase (303 aa).

A (6S)-5,6,7,8-tetrahydrofolate-binding site is contributed by 108–111 (SDLP).

It belongs to the Fmt family.

It carries out the reaction L-methionyl-tRNA(fMet) + (6R)-10-formyltetrahydrofolate = N-formyl-L-methionyl-tRNA(fMet) + (6S)-5,6,7,8-tetrahydrofolate + H(+). Functionally, attaches a formyl group to the free amino group of methionyl-tRNA(fMet). The formyl group appears to play a dual role in the initiator identity of N-formylmethionyl-tRNA by promoting its recognition by IF2 and preventing the misappropriation of this tRNA by the elongation apparatus. The polypeptide is Methionyl-tRNA formyltransferase (Rickettsia rickettsii (strain Iowa)).